Consider the following 225-residue polypeptide: Putative 5'-nucleotidase alr3139 (225 aa).

Aspartate 8, aspartate 9, serine 37, and asparagine 88 together coordinate a divalent metal cation.

This sequence belongs to the SurE nucleotidase family. A divalent metal cation serves as cofactor.

It is found in the cytoplasm. The enzyme catalyses a ribonucleoside 5'-phosphate + H2O = a ribonucleoside + phosphate. Functionally, nucleotidase that shows phosphatase activity on nucleoside 5'-monophosphates. The sequence is that of Putative 5'-nucleotidase alr3139 from Synechocystis sp. (strain ATCC 27184 / PCC 6803 / Kazusa).